The chain runs to 230 residues: Sugar fermentation stimulation protein homolog (230 aa).

The protein belongs to the SfsA family.

This chain is Sugar fermentation stimulation protein homolog, found in Clostridium botulinum (strain Alaska E43 / Type E3).